A 151-amino-acid chain; its full sequence is Zinc finger HIT domain-containing protein 3 (151 aa).

Positions 11, 14, 22, 25, 30, 34, 38, and 42 each coordinate Zn(2+). Residues 11–42 form an HIT-type zinc finger; sequence CVVCLEKPKYRCPTCRVPYCSVPCFQKHKEQC. The segment covering 43–53 has biased composition (basic and acidic residues); it reads SSEARPVEKRR. Positions 43 to 81 are disordered; it reads SSEARPVEKRRAGPPVRSEESKDDDSSVADFLNSDEEED. A compositionally biased stretch (acidic residues) spans 63-81; the sequence is SKDDDSSVADFLNSDEEED. Ser76 is modified (phosphoserine).

Thyroid receptor interacting proteins (TRIPs) specifically interact with the ligand binding domain of the thyroid receptor (TR). Requires the presence of thyroid hormone for its interaction. Interacts with NUFIP1. Interacts (via HIT-type zinc finger) with the RUVBL1/RUVBL2 complex in the presence of ADP. As to expression, expressed in the cerebellum.

The protein resides in the cytoplasm. Its subcellular location is the nucleus. This is Zinc finger HIT domain-containing protein 3 (Znhit3) from Mus musculus (Mouse).